The primary structure comprises 131 residues: Fatty acid-binding protein (131 aa).

Residues arginine 106 and arginine 126–tyrosine 128 each bind (5Z,8Z,11Z,14Z)-eicosatetraenoate. (9Z)-octadecenoate-binding positions include arginine 106 and arginine 126–tyrosine 128.

Belongs to the calycin superfamily. Fatty-acid binding protein (FABP) family.

The protein resides in the cytoplasm. Its function is as follows. FABPs are thought to play a role in the intracellular transport of long-chain fatty acids and their acyl-CoA esters. This chain is Fatty acid-binding protein, found in Lepidoglyphus destructor (Storage mite).